The chain runs to 123 residues: ATP synthase epsilon chain (123 aa).

The protein belongs to the ATPase epsilon chain family. In terms of assembly, F-type ATPases have 2 components, CF(1) - the catalytic core - and CF(0) - the membrane proton channel. CF(1) has five subunits: alpha(3), beta(3), gamma(1), delta(1), epsilon(1). CF(0) has three main subunits: a, b and c.

It is found in the cell inner membrane. In terms of biological role, produces ATP from ADP in the presence of a proton gradient across the membrane. This is ATP synthase epsilon chain from Helicobacter pylori (strain P12).